We begin with the raw amino-acid sequence, 206 residues long: Thymidylate kinase (206 aa).

10–17 lines the ATP pocket; it reads GVDGVGKT.

Belongs to the thymidylate kinase family.

The catalysed reaction is dTMP + ATP = dTDP + ADP. Functionally, phosphorylation of dTMP to form dTDP in both de novo and salvage pathways of dTTP synthesis. The polypeptide is Thymidylate kinase (Bifidobacterium longum (strain DJO10A)).